Consider the following 193-residue polypeptide: Large ribosomal subunit protein bL21 (193 aa).

The protein belongs to the bacterial ribosomal protein bL21 family. In terms of assembly, part of the 50S ribosomal subunit. Contacts protein L20.

This protein binds to 23S rRNA in the presence of protein L20. The chain is Large ribosomal subunit protein bL21 from Ruegeria pomeroyi (strain ATCC 700808 / DSM 15171 / DSS-3) (Silicibacter pomeroyi).